A 299-amino-acid polypeptide reads, in one-letter code: tRNA pseudouridine synthase B (299 aa).

Catalysis depends on Asp38, which acts as the Nucleophile.

It belongs to the pseudouridine synthase TruB family. Type 1 subfamily.

It catalyses the reaction uridine(55) in tRNA = pseudouridine(55) in tRNA. In terms of biological role, responsible for synthesis of pseudouridine from uracil-55 in the psi GC loop of transfer RNAs. The polypeptide is tRNA pseudouridine synthase B (Alkaliphilus oremlandii (strain OhILAs) (Clostridium oremlandii (strain OhILAs))).